Reading from the N-terminus, the 366-residue chain is UDP-N-acetylglucosamine--N-acetylmuramyl-(pentapeptide) pyrophosphoryl-undecaprenol N-acetylglucosamine transferase (366 aa).

UDP-N-acetyl-alpha-D-glucosamine-binding positions include 14–16, Asn-125, Arg-168, Ser-196, and Gln-297; that span reads TGG.

Belongs to the glycosyltransferase 28 family. MurG subfamily.

Its subcellular location is the cell inner membrane. The enzyme catalyses di-trans,octa-cis-undecaprenyl diphospho-N-acetyl-alpha-D-muramoyl-L-alanyl-D-glutamyl-meso-2,6-diaminopimeloyl-D-alanyl-D-alanine + UDP-N-acetyl-alpha-D-glucosamine = di-trans,octa-cis-undecaprenyl diphospho-[N-acetyl-alpha-D-glucosaminyl-(1-&gt;4)]-N-acetyl-alpha-D-muramoyl-L-alanyl-D-glutamyl-meso-2,6-diaminopimeloyl-D-alanyl-D-alanine + UDP + H(+). The protein operates within cell wall biogenesis; peptidoglycan biosynthesis. Functionally, cell wall formation. Catalyzes the transfer of a GlcNAc subunit on undecaprenyl-pyrophosphoryl-MurNAc-pentapeptide (lipid intermediate I) to form undecaprenyl-pyrophosphoryl-MurNAc-(pentapeptide)GlcNAc (lipid intermediate II). In Bradyrhizobium diazoefficiens (strain JCM 10833 / BCRC 13528 / IAM 13628 / NBRC 14792 / USDA 110), this protein is UDP-N-acetylglucosamine--N-acetylmuramyl-(pentapeptide) pyrophosphoryl-undecaprenol N-acetylglucosamine transferase.